Here is a 210-residue protein sequence, read N- to C-terminus: Fibroblast growth factor 21 (210 aa).

Positions 1–28 are cleaved as a signal peptide; the sequence is MEWMRSRVGTLGLWVRLLLAVFLLGVYQ. The disordered stretch occupies residues 144–210; that stretch reads PLRLPQKDSP…LQGRSPSYAS (67 aa).

Belongs to the heparin-binding growth factors family. In terms of assembly, interacts (via C-terminus) with KLB; this interaction is direct. Interacts with FGFR4. Most abundantly expressed in the liver, also expressed in the thymus at lower levels. Expressed in skeletal muscle (at protein level). Secreted in plasma (at protein level).

It is found in the secreted. Functionally, stimulates glucose uptake in differentiated adipocytes via the induction of glucose transporter SLC2A1/GLUT1 expression (but not SLC2A4/GLUT4 expression). Activity probably requires the presence of KLB. Regulates systemic glucose homeostasis and insulin sensitivity. In Mus musculus (Mouse), this protein is Fibroblast growth factor 21 (Fgf21).